Consider the following 39-residue polypeptide: Pro-opiomelanocortin (39 aa).

Position 13 is a valine amide (valine 13).

It belongs to the POMC family.

Its subcellular location is the secreted. Precursor protein for pituitary hormones that regulate stress and environmental adaptation. Its function is as follows. Stimulates the adrenal glands to release cortisol. Functionally, anorexigenic peptide. Increases the pigmentation of skin by increasing melanin production in melanocytes. In Struthio camelus (Common ostrich), this protein is Pro-opiomelanocortin (POMC).